Reading from the N-terminus, the 426-residue chain is NADH-quinone oxidoreductase subunit D 1 (426 aa).

A disordered region spans residues 1–51 (MATEFTVPDSAARIATAQQAGGGTPVRSGPPDEGGEFSGDRMSLSMGPSHP).

This sequence belongs to the complex I 49 kDa subunit family. In terms of assembly, NDH-1 is composed of 14 different subunits. Subunits NuoB, C, D, E, F, and G constitute the peripheral sector of the complex.

It localises to the cell inner membrane. The catalysed reaction is a quinone + NADH + 5 H(+)(in) = a quinol + NAD(+) + 4 H(+)(out). Its function is as follows. NDH-1 shuttles electrons from NADH, via FMN and iron-sulfur (Fe-S) centers, to quinones in the respiratory chain. The immediate electron acceptor for the enzyme in this species is believed to be ubiquinone. Couples the redox reaction to proton translocation (for every two electrons transferred, four hydrogen ions are translocated across the cytoplasmic membrane), and thus conserves the redox energy in a proton gradient. This chain is NADH-quinone oxidoreductase subunit D 1, found in Opitutus terrae (strain DSM 11246 / JCM 15787 / PB90-1).